A 625-amino-acid polypeptide reads, in one-letter code: Probable potassium transport system protein Kup 2 (625 aa).

A run of 12 helical transmembrane segments spans residues 10–30, 47–67, 104–124, 140–160, 172–192, 214–234, 250–270, 283–303, 347–367, 369–389, 396–416, and 422–442; these read LAALTLGAMGVVYGDIGTSPL, GVHLIGAVSVIFWGLMMVVTL, VLLLMGVFGAALFYGDSVITP, PAFKSYVLPISVTVLIGLFAV, FGPVIMLWFAVLSVTGVAEII, GWHMFVAVGAIVLAFTGVEAL, WLGLVLPALAINYMGQGALLM, LFPQAWLMPAVVLATLATVIA, WLLLISVLLAVVGFGSSSALA, AYGIAVTMTMLITTALTFFVV, PLPVALAATAVFLALDTLLVV, and FFQGGWFPLVLGLVIFTVMAT.

It belongs to the HAK/KUP transporter (TC 2.A.72) family.

It localises to the cell inner membrane. The catalysed reaction is K(+)(in) + H(+)(in) = K(+)(out) + H(+)(out). Transport of potassium into the cell. Likely operates as a K(+):H(+) symporter. This chain is Probable potassium transport system protein Kup 2, found in Albidiferax ferrireducens (strain ATCC BAA-621 / DSM 15236 / T118) (Rhodoferax ferrireducens).